We begin with the raw amino-acid sequence, 526 residues long: PTS system alpha-glucoside-specific EIICB component (526 aa).

The region spanning 1 to 417 (MLKHFQRLGG…YNVKTSGRED (417 aa)) is the PTS EIIC type-1 domain. A run of 12 helical transmembrane segments spans residues 12–32 (LFAP…TIIL), 59–79 (GWTV…IGLA), 88–108 (LAVL…LTFW), 132–152 (IKTL…TIYI), 173–193 (LVSA…CLVW), 200–220 (ISSL…LYTF), 224–244 (ILIP…GPAV), 274–294 (GGFA…ALAM), 305–325 (IVSG…ITEP), 330–350 (FLFI…TMAA), 355–375 (FGVV…WLPL), and 381–401 (GVMF…YLVF). Residues 447 to 526 (SGKAKAFLEA…ESFENLMEQN (80 aa)) form the PTS EIIB type-1 domain. Catalysis depends on cysteine 469, which acts as the Phosphocysteine intermediate; for EIIB activity.

The protein resides in the cell membrane. Functionally, the phosphoenolpyruvate-dependent sugar phosphotransferase system (sugar PTS), a major carbohydrate active -transport system, catalyzes the phosphorylation of incoming sugar substrates concomitantly with their translocation across the cell membrane. This system is involved in alpha-glucoside transport. This Fusobacterium mortiferum protein is PTS system alpha-glucoside-specific EIICB component (malB).